Consider the following 291-residue polypeptide: MDPIRKPAWLQKKITPAAHAEMEGLLKELRLNTVCQQARCPNITECFGKRQATFLILGRICTRLCSFCSVSKETPLPLEPGEAASVAEAVKRLGLSHVVITSPTRDDLSDGGASVYAETVARIRSVSPRTKVELLIPDFRGERAALAAVVESAPDILGHNLETVPRLYSIRSGADYQRSLDLLAQARRMAPDLNTKSGLMLGLGEEEAELYAVMEDLLKAGCGYLSLGQYLAPSRMHHPVQRYVEPELFEKYKEKALAMGFEHVESAPYVRSSYHAENYLEVKSPPPEGEG.

C35, C40, C46, C61, C65, C68, and S273 together coordinate [4Fe-4S] cluster. A Radical SAM core domain is found at F47–E262.

The protein belongs to the radical SAM superfamily. Lipoyl synthase family. The cofactor is [4Fe-4S] cluster.

The protein resides in the cytoplasm. The catalysed reaction is [[Fe-S] cluster scaffold protein carrying a second [4Fe-4S](2+) cluster] + N(6)-octanoyl-L-lysyl-[protein] + 2 oxidized [2Fe-2S]-[ferredoxin] + 2 S-adenosyl-L-methionine + 4 H(+) = [[Fe-S] cluster scaffold protein] + N(6)-[(R)-dihydrolipoyl]-L-lysyl-[protein] + 4 Fe(3+) + 2 hydrogen sulfide + 2 5'-deoxyadenosine + 2 L-methionine + 2 reduced [2Fe-2S]-[ferredoxin]. Its pathway is protein modification; protein lipoylation via endogenous pathway; protein N(6)-(lipoyl)lysine from octanoyl-[acyl-carrier-protein]: step 2/2. Its function is as follows. Catalyzes the radical-mediated insertion of two sulfur atoms into the C-6 and C-8 positions of the octanoyl moiety bound to the lipoyl domains of lipoate-dependent enzymes, thereby converting the octanoylated domains into lipoylated derivatives. This chain is Lipoyl synthase, found in Geobacter sp. (strain M21).